The following is a 497-amino-acid chain: Cytoplasmic dynein 1 light intermediate chain 2 (497 aa).

ATP is bound at residue 61-68; it reads GEDGSGKT. 4 disordered regions span residues 187–206, 366–408, 423–461, and 474–497; these read PEEG…SGSD, QQES…IKNN, LSKK…TEQC, and QEEL…ENEA. Residues Ser194, Ser369, and Ser377 each carry the phosphoserine modification. Position 383 is an omega-N-methylarginine (Arg383). Residues 423–444 show a composition bias toward polar residues; the sequence is LSKKTGSPGSPSAGGVQSTAKK. A Phosphothreonine modification is found at Thr427. Phosphoserine is present on residues Ser429 and Ser432. The span at 476 to 485 shows a compositional bias: basic and acidic residues; sequence ELDRMTRKPD. The segment covering 487 to 497 has biased composition (polar residues); sequence MVTNSSTENEA.

It belongs to the dynein light intermediate chain family. As to quaternary structure, homodimer. The cytoplasmic dynein 1 complex consists of two catalytic heavy chains (HCs) and a number of non-catalytic subunits presented by intermediate chains (ICs), light intermediate chains (LICs) and light chains (LCs); the composition seems to vary in respect to the IC, LIC and LC composition. The heavy chain homodimer serves as a scaffold for the probable homodimeric assembly of the respective non-catalytic subunits. The ICs and LICs bind directly to the HC dimer and the LCs assemble on the IC dimer. Self-associates. Interacts with DYNC1H1; DYNC1LI1 and DYNC1LI2 bind mutually exclusive to DYNC1H1. As to expression, ubiquitous.

It localises to the cytoplasm. It is found in the cytoskeleton. In terms of biological role, acts as one of several non-catalytic accessory components of the cytoplasmic dynein 1 complex that are thought to be involved in linking dynein to cargos and to adapter proteins that regulate dynein function. Cytoplasmic dynein 1 acts as a motor for the intracellular retrograde motility of vesicles and organelles along microtubules. May play a role in binding dynein to membranous organelles or chromosomes. In Rattus norvegicus (Rat), this protein is Cytoplasmic dynein 1 light intermediate chain 2 (Dync1li2).